Consider the following 918-residue polypeptide: Rap guanine nucleotide exchange factor 3 (918 aa).

A Phosphoserine modification is found at serine 79. A DEP domain is found at 110-186; the sequence is ATYPTLIRDR…RDAQFYRFPG (77 aa). The tract at residues 218–242 is interaction with PDE3B; it reads TVALRKPPGQRTDEELDLIFEELLH. 3',5'-cyclic AMP is bound by residues 311–314 and 321–322; these read GQLA and RA. Residues 369–388 form a disordered region; sequence TSQGAGPSRPPTPGRNRYTV. The region spanning 384-521 is the N-terminal Ras-GEF domain; it reads NRYTVMSGTP…EQYPERRRHH (138 aa). An interaction with PDE3B region spans residues 398 to 422; the sequence is ELLLEAMRPDSSAHDPTETFLSDFL. Serine 531 and serine 859 each carry phosphoserine. One can recognise a Ras-GEF domain in the interval 665–884; the sequence is SAKDLAGQLT…SRISTCSEQS (220 aa).

As to quaternary structure, interacts with PDE3B and PIK3R6; form a signaling complex that regulates phosphatidylinositol 3-kinase gamma in angiogenesis.

It is found in the cytoplasm. The protein resides in the membrane. Functionally, guanine nucleotide exchange factor (GEF) for RAP1A and RAP2A small GTPases that is activated by binding cAMP. Through simultaneous binding of PDE3B to RAPGEF3 and PIK3R6 is assembled in a signaling complex in which it activates the PI3K gamma complex and which is involved in angiogenesis. Plays a role in the modulation of the cAMP-induced dynamic control of endothelial barrier function through a pathway that is independent on Rho-mediated signaling. Required for the actin rearrangement at cell-cell junctions, such as stress fibers and junctional actin. This chain is Rap guanine nucleotide exchange factor 3 (Rapgef3), found in Mus musculus (Mouse).